Here is a 460-residue protein sequence, read N- to C-terminus: WD repeat-containing protein 41 (460 aa).

WD repeat units follow at residues 40-79, 82-128, 131-168, 220-258, 321-359, and 403-441; these read EAHR…KLLE, GHTQ…QIQR, CFQS…LCKT, DHQD…VQAC, AHDS…QLAA, and GHSS…SGVR.

As to quaternary structure, component of the C9orf72-SMCR8 complex, at least composed of C9orf72, SMCR8 and WDR41. The complex is formed of two protomers, each individually consisting of one molecule each of C9orf72, SMCR8 and WDR41. The protomers homodimerize via an interaction between C9orf72 (via C-terminus) and SMCR8 (via N-terminus). Within each protomer SMCR8 (via DENN domain) acts as a bridging protein between WDR41 (via C-terminus and N-terminus) and C9orf72 (via C-terminus). The C9orf72-SMCR8 complex associates with the ULK1/ATG1 kinase complex.

The protein localises to the cytoplasm. Its function is as follows. Non-catalytic component of the C9orf72-SMCR8 complex, a complex that has guanine nucleotide exchange factor (GEF) activity and regulates autophagy. The C9orf72-SMCR8 complex promotes the exchange of GDP to GTP, converting inactive GDP-bound RAB8A and RAB39B into their active GTP-bound form, thereby promoting autophagosome maturation. As part of the C9orf72-SMCR8 complex, stimulates RAB8A and RAB11A GTPase activity in vitro, however WDR42 is shown not be an essential complex component for this function. The C9orf72-SMCR8 complex also acts as a negative regulator of autophagy initiation by interacting with the ULK1/ATG1 kinase complex and inhibiting its protein kinase activity. This Mus musculus (Mouse) protein is WD repeat-containing protein 41.